A 480-amino-acid chain; its full sequence is MNDVAIVKEGWLHKRGEYIKTWRPRYFLLKNDGTFIGYKERPQDVDQRESPLNNFSVAQCQLMKTERPRPNTFIIRCLQWTTVIERTFHVETPEEREEWATAIQTVADGLKRQEEETMDFRSGSPSDNSGAEEMEVSLAKPKHRVTMNEFEYLKLLGKGTFGKVILVKEKATGRYYAMKILKKEVIVAKDEVAHTLTENRVLQNSRHPFLTALKYSFQTHDRLCFVMEYANGGELFFHLSRERVFSEDRARFYGAEIVSALDYLHSEKNVVYRDLKLENLMLDKDGHIKITDFGLCKEGIKDGATMKTFCGTPEYLAPEVLEDNDYGRAVDWWGLGVVMYEMMCGRLPFYNQDHEKLFELILMEEIRFPRTLGPEAKSLLSGLLKKDPTQRLGGGSEDAKEIMQHRFFANIVWQDVYEKKLSPPFKPQVTSETDTRYFDEEFTAQMITITPPDQDDSMECVDSERRPHFPQFSYSASGTA.

The region spanning 5–108 (AIVKEGWLHK…WATAIQTVAD (104 aa)) is the PH domain. Lysine 14 and lysine 20 each carry N6-acetyllysine. 14–19 (KRGEYI) is a 1D-myo-inositol 1,3,4,5-tetrakisphosphate binding site. Residues 23 to 25 (RPR) and asparagine 53 contribute to the 1D-myo-inositol 1,3,4,5-tetrakisphosphate site. Cysteine 60 and cysteine 77 form a disulfide bridge. Arginine 86 is a 1D-myo-inositol 1,3,4,5-tetrakisphosphate binding site. The tract at residues 114–137 (EEETMDFRSGSPSDNSGAEEMEVS) is disordered. Serine 124 bears the Phosphoserine mark. 2 positions are modified to phosphoserine; alternate: serine 126 and serine 129. 2 O-linked (GlcNAc) serine; alternate glycosylation sites follow: serine 126 and serine 129. The Protein kinase domain occupies 150 to 408 (FEYLKLLGKG…AKEIMQHRFF (259 aa)). Residue 156–164 (LGKGTFGKV) coordinates ATP. Residue tyrosine 176 is modified to Phosphotyrosine; by TNK2. Residue lysine 179 participates in ATP binding. The active-site Proton acceptor is the aspartate 274. Residue lysine 284 forms a Glycyl lysine isopeptide (Lys-Gly) (interchain with G-Cter in ubiquitin) linkage. Cysteine 296 and cysteine 310 form a disulfide bridge. A glycan (O-linked (GlcNAc) threonine) is linked at threonine 305. Residue threonine 308 is modified to Phosphothreonine; by IKKE, PDPK1 and TBK1. O-linked (GlcNAc) threonine glycosylation occurs at threonine 312. The AGC-kinase C-terminal domain maps to 409–480 (ANIVWQDVYE…QFSYSASGTA (72 aa)). The residue at position 448 (threonine 448) is a Phosphothreonine. Residue threonine 450 is modified to Phosphothreonine; by MTOR. Positions 450–480 (TPPDQDDSMECVDSERRPHFPQFSYSASGTA) are disordered. Serine 473 carries O-linked (GlcNAc) serine; alternate glycosylation. Serine 473 carries the phosphoserine; by IKKE, MTOR, PRKDC and TBK1; alternate modification. A Phosphotyrosine modification is found at tyrosine 474. Position 477 is a phosphoserine; by CDK2 and MTOR (serine 477). Residue threonine 479 is modified to Phosphothreonine; by CDK2 and MTOR.

The protein belongs to the protein kinase superfamily. AGC Ser/Thr protein kinase family. RAC subfamily. Interacts with and phosphorylated by PDPK1. Interacts with AGAP2 (isoform 2/PIKE-A); the interaction occurs in the presence of guanine nucleotides. Interacts with AKTIP. Interacts (via PH domain) with MTCP1, TCL1A and TCL1B. Interacts with CDKN1B; the interaction phosphorylates CDKN1B promoting 14-3-3 binding and cell-cycle progression. Interacts with MAP3K5 and TRAF6. Interacts with BAD, PPP2R5B, STK3 and STK4. Interacts (via PH domain) with SIRT1. Interacts with SRPK2 in a phosphorylation-dependent manner. Interacts with TRIM13; the interaction ubiquitinates AKT1 leading to its proteasomal degradation. Interacts with RAF1. Interacts (via the C-terminus) with CCDC88A (via its C-terminus) and THEM4 (via its C-terminus). Interacts with GRB10; the interaction leads to GRB10 phosphorylation thus promoting YWHAE-binding. Interacts with KCTD20. Interacts with BTBD10. Interacts with PA2G4. Interacts with KIF14; the interaction is detected in the plasma membrane upon INS stimulation and promotes AKT1 phosphorylation. Interacts with FAM83B; activates the PI3K/AKT signaling cascade. Interacts with WDFY2 (via WD repeats 1-3). Forms a complex with WDFY2 and FOXO1. Interacts with FAM168A. Interacts with SYAP1 (via phosphorylated form and BSD domain); this interaction is enhanced in a mTORC2-mediated manner in response to epidermal growth factor (EGF) stimulation and activates AKT1. Interacts with PKHM3. Interacts with FKBP5/FKBP51; promoting interaction between Akt/AKT1 and PHLPP1, thereby enhancing dephosphorylation and subsequent activation of Akt/AKT1. Interacts with TMEM175; leading to formation of the lysoK(GF) complex. In terms of processing, O-GlcNAcylation at Thr-305 and Thr-312 inhibits activating phosphorylation at Thr-308 via disrupting the interaction between AKT1 and PDPK1. O-GlcNAcylation at Ser-473 also probably interferes with phosphorylation at this site. Post-translationally, phosphorylation on Thr-308, Ser-473 and Tyr-474 is required for full activity. Phosphorylation of the activation loop at Thr-308 by PDPK1/PDK1 is a prerequisite for full activation. Phosphorylation by mTORC2 in response to growth factors plays a key role in AKT1 activation: mTORC2 phosphorylates different sites depending on the context, such as Thr-450, Ser-473, Ser-477 or Thr-479, thereby facilitating subsequent phosphorylation of the activation loop by PDPK1/PDK1. Phosphorylation at Ser-473 by mTORC2 promotes ubiquitination and degradation by the proteasome. Also phosphorylated at Ser-477 and Thr-479 by CDK2, facilitating subsequent phosphorylation of the activation loop by PDPK1/PDK1. Activated TNK2 phosphorylates it on Tyr-176 resulting in its binding to the anionic plasma membrane phospholipid PA. This phosphorylated form localizes to the cell membrane, where it is targeted by PDPK1 and PDPK2 for further phosphorylations on Thr-308 and Ser-473 leading to its activation. Phosphorylated at Thr-308 and Ser-473 by IKBKE and TBK1. Ser-473 phosphorylation is enhanced by interaction with AGAP2 isoform 2 (PIKE-A). Ser-473 phosphorylation is enhanced by signaling through activated FLT3. Ser-473 is dephosphorylated by PHLPP. Dephosphorylated at Thr-308 and Ser-473 by PP2A phosphatase. The phosphorylated form of PPP2R5B is required for bridging AKT1 with PP2A phosphatase. Ser-473 is dephosphorylated by CPPED1, leading to termination of signaling. AIM2 acts as an inhibitor of AKT1 by inhibiting phosphorylation Ser-473: AIM2 acts both by inhibiting the activity of PRKDC/DNA-PK kinase and promoting dephosphorylation by PP2A phosphatase. Ubiquitinated; undergoes both 'Lys-48'- and 'Lys-63'-linked polyubiquitination. TRAF6-induced 'Lys-63'-linked AKT1 ubiquitination is critical for phosphorylation and activation. When ubiquitinated, it translocates to the plasma membrane, where it becomes phosphorylated. When fully phosphorylated and translocated into the nucleus, undergoes 'Lys-48'-polyubiquitination catalyzed by TTC3, leading to its degradation by the proteasome. Also ubiquitinated by TRIM13 leading to its proteasomal degradation. Ubiquitinated via 'Lys-48'-linked polyubiquitination by ZNRF1, leading to its degradation by the proteasome. Phosphorylated, undergoes 'Lys-48'-linked polyubiquitination preferentially at Lys-284 catalyzed by MUL1, leading to its proteasomal degradation. In terms of processing, acetylated on Lys-14 and Lys-20 by the histone acetyltransferases EP300 and KAT2B. Acetylation results in reduced phosphorylation and inhibition of activity. Deacetylated at Lys-14 and Lys-20 by SIRT1. SIRT1-mediated deacetylation relieves the inhibition. Post-translationally, cleavage by caspase-3/CASP3. Cleaved at the caspase-3 consensus site Asp-462 during apoptosis, resulting in down-regulation of the AKT signaling pathway and decreased cell survival. As to expression, widely expressed. Low levels found in liver with slightly higher levels present in thymus and testis.

It is found in the cytoplasm. The protein resides in the nucleus. Its subcellular location is the cell membrane. It localises to the mitochondrion intermembrane space. The catalysed reaction is L-seryl-[protein] + ATP = O-phospho-L-seryl-[protein] + ADP + H(+). It catalyses the reaction L-threonyl-[protein] + ATP = O-phospho-L-threonyl-[protein] + ADP + H(+). Three specific sites, one in the kinase domain (Thr-308) and the two other ones in the C-terminal regulatory region (Ser-473 and Tyr-474), need to be phosphorylated for its full activation. Its function is as follows. AKT1 is one of 3 closely related serine/threonine-protein kinases (AKT1, AKT2 and AKT3) called the AKT kinase, and which regulate many processes including metabolism, proliferation, cell survival, growth and angiogenesis. This is mediated through serine and/or threonine phosphorylation of a range of downstream substrates. Over 100 substrate candidates have been reported so far, but for most of them, no isoform specificity has been reported. AKT is responsible of the regulation of glucose uptake by mediating insulin-induced translocation of the SLC2A4/GLUT4 glucose transporter to the cell surface. Phosphorylation of PTPN1 at 'Ser-50' negatively modulates its phosphatase activity preventing dephosphorylation of the insulin receptor and the attenuation of insulin signaling. Phosphorylation of TBC1D4 triggers the binding of this effector to inhibitory 14-3-3 proteins, which is required for insulin-stimulated glucose transport. AKT also regulates the storage of glucose in the form of glycogen by phosphorylating GSK3A at 'Ser-21' and GSK3B at 'Ser-9', resulting in inhibition of its kinase activity. Phosphorylation of GSK3 isoforms by AKT is also thought to be one mechanism by which cell proliferation is driven. AKT also regulates cell survival via the phosphorylation of MAP3K5 (apoptosis signal-related kinase). Phosphorylation of 'Ser-83' decreases MAP3K5 kinase activity stimulated by oxidative stress and thereby prevents apoptosis. AKT mediates insulin-stimulated protein synthesis by phosphorylating TSC2 at 'Ser-939' and 'Thr-1462', thereby activating the mTORC1 signaling pathway, and leading to both phosphorylation of 4E-BP1 and in activation of RPS6KB1. Also regulates the mTORC1 signaling pathway by catalyzing phosphorylation of CASTOR1 and DEPDC5. AKT plays a role as key modulator of the AKT-mTOR signaling pathway controlling the tempo of the process of newborn neurons integration during adult neurogenesis, including correct neuron positioning, dendritic development and synapse formation. Part of a positive feedback loop of mTORC2 signaling by mediating phosphorylation of MAPKAP1/SIN1, promoting mTORC2 activation. AKT is involved in the phosphorylation of members of the FOXO factors (Forkhead family of transcription factors), leading to binding of 14-3-3 proteins and cytoplasmic localization. In particular, FOXO1 is phosphorylated at 'Thr-24', 'Ser-256' and 'Ser-319'. FOXO3 and FOXO4 are phosphorylated on equivalent sites. AKT has an important role in the regulation of NF-kappa-B-dependent gene transcription and positively regulates the activity of CREB1 (cyclic AMP (cAMP)-response element binding protein). The phosphorylation of CREB1 induces the binding of accessory proteins that are necessary for the transcription of pro-survival genes such as BCL2 and MCL1. AKT phosphorylates 'Ser-454' on ATP citrate lyase (ACLY), thereby potentially regulating ACLY activity and fatty acid synthesis. Activates the 3B isoform of cyclic nucleotide phosphodiesterase (PDE3B) via phosphorylation of 'Ser-273', resulting in reduced cyclic AMP levels and inhibition of lipolysis. Phosphorylates PIKFYVE on 'Ser-318', which results in increased PI(3)P-5 activity. The Rho GTPase-activating protein DLC1 is another substrate and its phosphorylation is implicated in the regulation cell proliferation and cell growth. Signals downstream of phosphatidylinositol 3-kinase (PI(3)K) to mediate the effects of various growth factors such as platelet-derived growth factor (PDGF), epidermal growth factor (EGF), insulin and insulin-like growth factor 1 (IGF1). AKT mediates the antiapoptotic effects of IGF1. Essential for the SPATA13-mediated regulation of cell migration and adhesion assembly and disassembly. May be involved in the regulation of the placental development. Phosphorylates STK4/MST1 at 'Thr-120' and 'Thr-387' leading to inhibition of its: kinase activity, nuclear translocation, autophosphorylation and ability to phosphorylate FOXO3. Phosphorylates STK3/MST2 at 'Thr-117' and 'Thr-384' leading to inhibition of its: cleavage, kinase activity, autophosphorylation at Thr-180, binding to RASSF1 and nuclear translocation. Phosphorylates SRPK2 and enhances its kinase activity towards SRSF2 and ACIN1 and promotes its nuclear translocation. Phosphorylates RAF1 at 'Ser-259' and negatively regulates its activity. Phosphorylation of BAD stimulates its pro-apoptotic activity. Phosphorylates KAT6A at 'Thr-369' and this phosphorylation inhibits the interaction of KAT6A with PML and negatively regulates its acetylation activity towards p53/TP53. Phosphorylates palladin (PALLD), modulating cytoskeletal organization and cell motility. Phosphorylates prohibitin (PHB), playing an important role in cell metabolism and proliferation. Phosphorylates CDKN1A, for which phosphorylation at 'Thr-145' induces its release from CDK2 and cytoplasmic relocalization. These recent findings indicate that the AKT1 isoform has a more specific role in cell motility and proliferation. Phosphorylates CLK2 thereby controlling cell survival to ionizing radiation. Phosphorylates PCK1 at 'Ser-90', reducing the binding affinity of PCK1 to oxaloacetate and changing PCK1 into an atypical protein kinase activity using GTP as donor. Also acts as an activator of TMEM175 potassium channel activity in response to growth factors: forms the lysoK(GF) complex together with TMEM175 and acts by promoting TMEM175 channel activation, independently of its protein kinase activity. Acts as a negative regulator of the cGAS-STING pathway by mediating phosphorylation of CGAS during mitosis, leading to its inhibition. Acts as a regulator of mitochondrial calcium uptake by mediating phosphorylation of MICU1 in the mitochondrial intermembrane space, impairing MICU1 maturation. Acts as an inhibitor of tRNA methylation by mediating phosphorylation of the N-terminus of METTL1, thereby inhibiting METTL1 methyltransferase activity. In response to LPAR1 receptor pathway activation, phosphorylates Rabin8/RAB3IP which alters its activity and phosphorylates WDR44 which induces WDR44 binding to Rab11, thereby switching Rab11 vesicular function from preciliary trafficking to endocytic recycling. The chain is RAC-alpha serine/threonine-protein kinase (Akt1) from Mus musculus (Mouse).